The following is a 266-amino-acid chain: 2-hydroxyisocaproyl-CoA dehydratase activator (266 aa).

ATP is bound by residues 10–14 and 102–104; these read STASK and GQD. [4Fe-4S] cluster is bound at residue Cys-125. ATP is bound at residue Asp-134. Cys-164 provides a ligand contact to [4Fe-4S] cluster. Gly-215 and Gln-241 together coordinate ATP.

Belongs to the HadI activator family. Homodimer. It depends on [4Fe-4S] cluster as a cofactor.

Functionally, involved in the reductive branch of L-leucine fermentation. Required for the activation of (R)-2-hydroxyisocaproyl-CoA dehydratase. The reduced activator transfers one electron to the dehydratase concomitant with hydrolysis of ATP. This protein is extremely sensitive towards oxygen. This Clostridioides difficile (Peptoclostridium difficile) protein is 2-hydroxyisocaproyl-CoA dehydratase activator.